Consider the following 68-residue polypeptide: Alpha-conotoxin-like Mr1.2 (68 aa).

The signal sequence occupies residues 1-21 (MGMRMMFTVFLLVVLATTVVS). Residues 22-48 (FTSDRGSDGRNAAAKDKASDLVALTVK) constitute a propeptide that is removed on maturation. Intrachain disulfides connect cysteine 50/cysteine 56 and cysteine 51/cysteine 64. The ser-Xaa-Pro motif, crucial for potent interaction with nAChR stretch occupies residues 52 to 54 (SNP). Position 65 is an asparagine amide (asparagine 65).

The protein belongs to the conotoxin A superfamily. In terms of tissue distribution, expressed by the venom duct.

The protein localises to the secreted. Functionally, alpha-conotoxins act on postsynaptic membranes, they bind to the nicotinic acetylcholine receptors (nAChR) and thus inhibit them. The protein is Alpha-conotoxin-like Mr1.2 of Conus marmoreus (Marble cone).